A 104-amino-acid polypeptide reads, in one-letter code: Seminal ribonuclease (104 aa).

4 disulfides stabilise this stretch: Cys-12/Cys-70, Cys-26/Cys-81, Cys-44/Cys-96, and Cys-51/Cys-58. Residues 27–31 (KPVNT), Lys-52, and Arg-71 contribute to the substrate site.

The protein belongs to the pancreatic ribonuclease family. In terms of assembly, homodimer; disulfide-linked.

The protein localises to the secreted. It catalyses the reaction an [RNA] containing cytidine + H2O = an [RNA]-3'-cytidine-3'-phosphate + a 5'-hydroxy-ribonucleotide-3'-[RNA].. It carries out the reaction an [RNA] containing uridine + H2O = an [RNA]-3'-uridine-3'-phosphate + a 5'-hydroxy-ribonucleotide-3'-[RNA].. The sequence is that of Seminal ribonuclease (SRN) from Saiga tatarica (Saiga antelope).